The following is a 357-amino-acid chain: Cytoplasmic tRNA 2-thiolation protein 1 (357 aa).

Positions 314 to 348 are disordered; the sequence is GVSRTRGRRGEKAGLHPDVGRGGGGGSSGPAEVAS. Residues 321–332 show a composition bias toward basic and acidic residues; the sequence is RRGEKAGLHPDV.

It belongs to the TtcA family. CTU1/NCS6/ATPBD3 subfamily.

Its subcellular location is the cytoplasm. The protein operates within tRNA modification; 5-methoxycarbonylmethyl-2-thiouridine-tRNA biosynthesis. In terms of biological role, plays a central role in 2-thiolation of mcm(5)S(2)U at tRNA wobble positions of tRNA(Lys), tRNA(Glu) and tRNA(Gln). Directly binds tRNAs and probably acts by catalyzing adenylation of tRNAs, an intermediate required for 2-thiolation. It is unclear whether it acts as a sulfurtransferase that transfers sulfur from thiocarboxylated URM1 onto the uridine of tRNAs at wobble position. The polypeptide is Cytoplasmic tRNA 2-thiolation protein 1 (Chlamydomonas reinhardtii (Chlamydomonas smithii)).